The chain runs to 211 residues: Large ribosomal subunit protein uL4 (211 aa).

Polar residues predominate over residues 41 to 53; sequence QAHSRQGTASTLT. Positions 41-78 are disordered; sequence QAHSRQGTASTLTRAEVRGGGRKPYKQKGTGRARQGTI. Residues 60–71 are compositionally biased toward basic residues; the sequence is GGRKPYKQKGTG.

The protein belongs to the universal ribosomal protein uL4 family. In terms of assembly, part of the 50S ribosomal subunit.

One of the primary rRNA binding proteins, this protein initially binds near the 5'-end of the 23S rRNA. It is important during the early stages of 50S assembly. It makes multiple contacts with different domains of the 23S rRNA in the assembled 50S subunit and ribosome. In terms of biological role, forms part of the polypeptide exit tunnel. The polypeptide is Large ribosomal subunit protein uL4 (Prochlorococcus marinus (strain MIT 9313)).